The chain runs to 441 residues: MTPEGLMKMQAVSVGLLLFSMTWAAPMPNEDRSSCGNQDSIHKDLAASVYPDPTVDEGTEDGQGALLHPPGQDRYGAALLRNITQPVKSLVTGAELRREGNQEKRPQSVLSVIPADVNDAKVSLKDIKNQESYLLTQSSPVKSKHTKHTRQTRRSTHYLTHLPQIKKTPSDLEGSGSPDLLVRGDNDVPPFSGDGQHFMHIPGKGGAGSGPESSTSRPLSGSSKAEVIDPHMSGLGSNEIPGREGHGGSAYATRDKAAQGAGSAGGSLVGGSNEITGSTNFRELPGKEGNRINAGSQNAHQGKVEFHYPQVASREKVKGGVEHAGRAGYNEIPKSSKGSSSKDAEESKGNQLTLTASQRFPGKGKSQGPALPSHSLSNEVKSEENHYVFHGQNNLTPNKGMSQRRGSWPSRRPNSHRRASTRQRDSSESSSSGSSSESHGD.

Residues 1-24 (MTPEGLMKMQAVSVGLLLFSMTWA) form the signal peptide. N-linked (GlcNAc...) asparagine glycosylation is present at Asn-82. Residues 137-441 (QSSPVKSKHT…SGSSSESHGD (305 aa)) form a disordered region. The segment covering 142 to 156 (KSKHTKHTRQTRRST) has biased composition (basic residues). Residues 178 to 200 (PDLLVRGDNDVPPFSGDGQHFMH) are dentonin. Residues 183 to 185 (RGD) carry the Cell attachment site motif. Ser-192 carries an O-linked (Xyl...) (chondroitin sulfate) serine glycan. The segment covering 211-223 (PESSTSRPLSGSS) has biased composition (polar residues). Positions 313 to 325 (SREKVKGGVEHAG) are enriched in basic and acidic residues. Composition is skewed to polar residues over residues 349–358 (GNQLTLTASQ) and 391–405 (GQNNLTPNKGMSQRR). The ASARM motif; interaction with PHEX stretch occupies residues 424–441 (RDSSESSSSGSSSESHGD). The span at 428–441 (ESSSSGSSSESHGD) shows a compositional bias: low complexity.

The protein belongs to the PF07175/osteoregulin family. Interacts (via ASARM motif) with PHEX; the interaction is zinc-dependent. In terms of processing, phosphorylated on serine residues in the ASARM motif; the phosphorylation is important for the inhibition of bone mineralization. Cleaved by CTSB/cathepsin B; the cleavage is blocked by metalloprotease PHEX. In terms of tissue distribution, expressed in osteocytes (at protein level). Expressed by chondrocytes, specifically in the hypertrophic zone of the bone growth plate (at protein level). Expressed in osteoblasts in bone (at protein level). Expressed by osteoblasts within the metaphysis (at protein level). Expressed at low levels in white fat, brown fat, testes, brain and aorta. Expressed in the craniofacial complex (at protein level). Expressed in odontoblasts, ameloblasts and in predentin during tooth development (at protein level). Expressed in the kidney (at protein level). Expressed in osteocytes in mandibular condylar cartilage and tibial cartilage (at protein level). Expressed in salivary glands.

It is found in the secreted. The protein resides in the extracellular space. The protein localises to the extracellular matrix. Functionally, regulates renal phosphate and uric acid excretion. Regulates bone mineralization by osteoblasts and cartilage mineralization by chondrocytes. Regulates the mineralization of the extracellular matrix of the craniofacial complex, such as teeth, bone and cartilage. Increases dental pulp stem cell proliferation. The protein is Matrix extracellular phosphoglycoprotein of Mus musculus (Mouse).